A 91-amino-acid chain; its full sequence is Small ribosomal subunit protein bS20 (91 aa).

It belongs to the bacterial ribosomal protein bS20 family.

Binds directly to 16S ribosomal RNA. This is Small ribosomal subunit protein bS20 from Caulobacter vibrioides (strain ATCC 19089 / CIP 103742 / CB 15) (Caulobacter crescentus).